The primary structure comprises 294 residues: Acetylglutamate kinase (294 aa).

Residues 67-68 (GG), arginine 89, and asparagine 193 contribute to the substrate site.

This sequence belongs to the acetylglutamate kinase family. ArgB subfamily.

The protein resides in the cytoplasm. It catalyses the reaction N-acetyl-L-glutamate + ATP = N-acetyl-L-glutamyl 5-phosphate + ADP. It participates in amino-acid biosynthesis; L-arginine biosynthesis; N(2)-acetyl-L-ornithine from L-glutamate: step 2/4. Its function is as follows. Catalyzes the ATP-dependent phosphorylation of N-acetyl-L-glutamate. The chain is Acetylglutamate kinase from Leptospira interrogans serogroup Icterohaemorrhagiae serovar copenhageni (strain Fiocruz L1-130).